The following is a 207-amino-acid chain: Thiamine-phosphate synthase (207 aa).

4-amino-2-methyl-5-(diphosphooxymethyl)pyrimidine-binding positions include 36 to 40 (QLRMK) and asparagine 68. Residues aspartate 69 and aspartate 88 each contribute to the Mg(2+) site. Serine 106 contributes to the 4-amino-2-methyl-5-(diphosphooxymethyl)pyrimidine binding site. 2-[(2R,5Z)-2-carboxy-4-methylthiazol-5(2H)-ylidene]ethyl phosphate is bound at residue 132 to 134 (TNT). Residue lysine 135 participates in 4-amino-2-methyl-5-(diphosphooxymethyl)pyrimidine binding. 2-[(2R,5Z)-2-carboxy-4-methylthiazol-5(2H)-ylidene]ethyl phosphate-binding positions include glycine 162 and 182-183 (VS).

The protein belongs to the thiamine-phosphate synthase family. It depends on Mg(2+) as a cofactor.

The catalysed reaction is 2-[(2R,5Z)-2-carboxy-4-methylthiazol-5(2H)-ylidene]ethyl phosphate + 4-amino-2-methyl-5-(diphosphooxymethyl)pyrimidine + 2 H(+) = thiamine phosphate + CO2 + diphosphate. It catalyses the reaction 2-(2-carboxy-4-methylthiazol-5-yl)ethyl phosphate + 4-amino-2-methyl-5-(diphosphooxymethyl)pyrimidine + 2 H(+) = thiamine phosphate + CO2 + diphosphate. The enzyme catalyses 4-methyl-5-(2-phosphooxyethyl)-thiazole + 4-amino-2-methyl-5-(diphosphooxymethyl)pyrimidine + H(+) = thiamine phosphate + diphosphate. It functions in the pathway cofactor biosynthesis; thiamine diphosphate biosynthesis; thiamine phosphate from 4-amino-2-methyl-5-diphosphomethylpyrimidine and 4-methyl-5-(2-phosphoethyl)-thiazole: step 1/1. Its function is as follows. Condenses 4-methyl-5-(beta-hydroxyethyl)thiazole monophosphate (THZ-P) and 2-methyl-4-amino-5-hydroxymethyl pyrimidine pyrophosphate (HMP-PP) to form thiamine monophosphate (TMP). This Methanococcus maripaludis (strain DSM 14266 / JCM 13030 / NBRC 101832 / S2 / LL) protein is Thiamine-phosphate synthase.